The following is a 477-amino-acid chain: Bifunctional protein HldE (477 aa).

The ribokinase stretch occupies residues 1–319; that stretch reads MKITLPPFDQ…RALQEQEQSG (319 aa). ATP is bound at residue 195 to 198; it reads NLAE. Asp-264 is an active-site residue. Residues 344 to 477 are cytidylyltransferase; it reads MTNGCFDLLH…IERMQSAPDT (134 aa).

This sequence in the N-terminal section; belongs to the carbohydrate kinase PfkB family. The protein in the C-terminal section; belongs to the cytidylyltransferase family. Homodimer.

The enzyme catalyses D-glycero-beta-D-manno-heptose 7-phosphate + ATP = D-glycero-beta-D-manno-heptose 1,7-bisphosphate + ADP + H(+). It catalyses the reaction D-glycero-beta-D-manno-heptose 1-phosphate + ATP + H(+) = ADP-D-glycero-beta-D-manno-heptose + diphosphate. It participates in nucleotide-sugar biosynthesis; ADP-L-glycero-beta-D-manno-heptose biosynthesis; ADP-L-glycero-beta-D-manno-heptose from D-glycero-beta-D-manno-heptose 7-phosphate: step 1/4. The protein operates within nucleotide-sugar biosynthesis; ADP-L-glycero-beta-D-manno-heptose biosynthesis; ADP-L-glycero-beta-D-manno-heptose from D-glycero-beta-D-manno-heptose 7-phosphate: step 3/4. Functionally, catalyzes the phosphorylation of D-glycero-D-manno-heptose 7-phosphate at the C-1 position to selectively form D-glycero-beta-D-manno-heptose-1,7-bisphosphate. In terms of biological role, catalyzes the ADP transfer from ATP to D-glycero-beta-D-manno-heptose 1-phosphate, yielding ADP-D-glycero-beta-D-manno-heptose. This is Bifunctional protein HldE from Alkalilimnicola ehrlichii (strain ATCC BAA-1101 / DSM 17681 / MLHE-1).